The following is a 103-amino-acid chain: Large ribosomal subunit protein eL14 (103 aa).

The protein belongs to the eukaryotic ribosomal protein eL14 family.

This Ignicoccus hospitalis (strain KIN4/I / DSM 18386 / JCM 14125) protein is Large ribosomal subunit protein eL14.